A 118-amino-acid polypeptide reads, in one-letter code: Cobalt transport protein CbiN (118 aa).

Helical transmembrane passes span 7 to 27 (INAL…VLGL) and 70 to 90 (SALF…YFGL). Residues 99–118 (ERASAASGAAAAPGDAPEGD) are disordered. A compositionally biased stretch (low complexity) spans 102 to 118 (SAASGAAAAPGDAPEGD).

It belongs to the CbiN family. Forms an energy-coupling factor (ECF) transporter complex composed of an ATP-binding protein (A component, CbiO), a transmembrane protein (T component, CbiQ) and 2 possible substrate-capture proteins (S components, CbiM and CbiN) of unknown stoichimetry.

It is found in the cell membrane. The protein operates within cofactor biosynthesis; adenosylcobalamin biosynthesis. Part of the energy-coupling factor (ECF) transporter complex CbiMNOQ involved in cobalt import. This Streptomyces coelicolor (strain ATCC BAA-471 / A3(2) / M145) protein is Cobalt transport protein CbiN.